Reading from the N-terminus, the 88-residue chain is MANTTSAKKATRKIARRTAVNKSRRTQMRGAVRNVEEAIKTGDRAAAVKALANAEPALMRAAQRNIIHKNNASRKVSRLTAQIAKLAK.

Belongs to the bacterial ribosomal protein bS20 family.

In terms of biological role, binds directly to 16S ribosomal RNA. This is Small ribosomal subunit protein bS20 from Bradyrhizobium diazoefficiens (strain JCM 10833 / BCRC 13528 / IAM 13628 / NBRC 14792 / USDA 110).